Here is a 461-residue protein sequence, read N- to C-terminus: tRNA modification GTPase MnmE (461 aa).

Residues Arg23, Glu88, and Arg127 each coordinate (6S)-5-formyl-5,6,7,8-tetrahydrofolate. Residues 223-383 (GLNTVIVGKP…LKECIKNLFF (161 aa)) enclose the TrmE-type G domain. Asn233 provides a ligand contact to K(+). GTP is bound by residues 233-238 (NVGKSS), 252-258 (TEIPGTT), and 277-280 (DTAG). Ser237 contributes to the Mg(2+) binding site. The K(+) site is built by Thr252, Ile254, and Thr257. Thr258 lines the Mg(2+) pocket. Lys461 lines the (6S)-5-formyl-5,6,7,8-tetrahydrofolate pocket.

The protein belongs to the TRAFAC class TrmE-Era-EngA-EngB-Septin-like GTPase superfamily. TrmE GTPase family. As to quaternary structure, homodimer. Heterotetramer of two MnmE and two MnmG subunits. K(+) is required as a cofactor.

The protein resides in the cytoplasm. In terms of biological role, exhibits a very high intrinsic GTPase hydrolysis rate. Involved in the addition of a carboxymethylaminomethyl (cmnm) group at the wobble position (U34) of certain tRNAs, forming tRNA-cmnm(5)s(2)U34. The chain is tRNA modification GTPase MnmE from Clostridium botulinum (strain Okra / Type B1).